Consider the following 625-residue polypeptide: Probable potassium transport system protein Kup 1 (625 aa).

Transmembrane regions (helical) follow at residues 14 to 34 (LSLL…TSPL), 50 to 70 (AAAV…ITTV), 104 to 124 (IVAL…ITPA), 139 to 159 (PALQ…LFAI), 170 to 190 (LFGP…LVGI), 213 to 233 (GATG…AEAL), 249 to 269 (WFAV…ALVI), 287 to 307 (LLLP…QSVI), 339 to 359 (IYVG…TIGF), 368 to 388 (AYGI…FIAM), 396 to 416 (LLAA…FFLA), and 421 to 441 (IAEG…LMWI).

The protein belongs to the HAK/KUP transporter (TC 2.A.72) family.

The protein resides in the cell inner membrane. The enzyme catalyses K(+)(in) + H(+)(in) = K(+)(out) + H(+)(out). In terms of biological role, transport of potassium into the cell. Likely operates as a K(+):H(+) symporter. The polypeptide is Probable potassium transport system protein Kup 1 (Bradyrhizobium sp. (strain ORS 278)).